Consider the following 214-residue polypeptide: uncharacterized protein (214 aa).

4 helical membrane passes run 10–30 (IPPLAVYLLVSGVVGVESLGI), 55–75 (IGVGVVAVIGAAVGDSIGYAI), 147–167 (VSGAICWAGGTTALVYFAGMA), and 174–194 (RFSWIALIITVVVGIIAAILL).

The protein belongs to the DedA family.

It is found in the cell membrane. This is an uncharacterized protein from Mycobacterium leprae (strain TN).